The following is a 273-amino-acid chain: Dermonecrotic toxin LsaSicTox-alphaIB1aii (273 aa).

Residue His-5 is part of the active site. Residues Glu-25 and Asp-27 each coordinate Mg(2+). The Nucleophile role is filled by His-41. Disulfide bonds link Cys-45–Cys-51 and Cys-47–Cys-190. Asp-85 is a binding site for Mg(2+).

This sequence belongs to the arthropod phospholipase D family. Class II subfamily. It depends on Mg(2+) as a cofactor. As to expression, expressed by the venom gland.

It localises to the secreted. It carries out the reaction an N-(acyl)-sphingosylphosphocholine = an N-(acyl)-sphingosyl-1,3-cyclic phosphate + choline. The catalysed reaction is an N-(acyl)-sphingosylphosphoethanolamine = an N-(acyl)-sphingosyl-1,3-cyclic phosphate + ethanolamine. The enzyme catalyses a 1-acyl-sn-glycero-3-phosphocholine = a 1-acyl-sn-glycero-2,3-cyclic phosphate + choline. It catalyses the reaction a 1-acyl-sn-glycero-3-phosphoethanolamine = a 1-acyl-sn-glycero-2,3-cyclic phosphate + ethanolamine. Functionally, dermonecrotic toxins cleave the phosphodiester linkage between the phosphate and headgroup of certain phospholipids (sphingolipid and lysolipid substrates), forming an alcohol (often choline) and a cyclic phosphate. This toxin acts on sphingomyelin (SM). It may also act on ceramide phosphoethanolamine (CPE), lysophosphatidylcholine (LPC) and lysophosphatidylethanolamine (LPE), but not on lysophosphatidylserine (LPS), and lysophosphatidylglycerol (LPG). It acts by transphosphatidylation, releasing exclusively cyclic phosphate products as second products. Induces dermonecrosis, hemolysis, increased vascular permeability, edema, inflammatory response, and platelet aggregation. The sequence is that of Dermonecrotic toxin LsaSicTox-alphaIB1aii from Loxosceles sabina (Tucson recluse spider).